We begin with the raw amino-acid sequence, 496 residues long: Glycerol kinase (496 aa).

Residue threonine 12 coordinates ADP. ATP is bound by residues threonine 12, threonine 13, and serine 14. A sn-glycerol 3-phosphate-binding site is contributed by threonine 12. Arginine 16 lines the ADP pocket. Residues arginine 82, glutamate 83, and tyrosine 134 each contribute to the sn-glycerol 3-phosphate site. 3 residues coordinate glycerol: arginine 82, glutamate 83, and tyrosine 134. Histidine 230 is subject to Phosphohistidine; by HPr. Aspartate 244 is a sn-glycerol 3-phosphate binding site. Glycerol-binding residues include aspartate 244 and glutamine 245. 2 residues coordinate ADP: threonine 266 and glycine 309. Residues threonine 266, glycine 309, glutamine 313, and glycine 410 each contribute to the ATP site. Glycine 410 and asparagine 414 together coordinate ADP.

Belongs to the FGGY kinase family. The phosphoenolpyruvate-dependent sugar phosphotransferase system (PTS), including enzyme I, and histidine-containing protein (HPr) are required for the phosphorylation of, which leads to the activation of the enzyme.

The catalysed reaction is glycerol + ATP = sn-glycerol 3-phosphate + ADP + H(+). Its pathway is polyol metabolism; glycerol degradation via glycerol kinase pathway; sn-glycerol 3-phosphate from glycerol: step 1/1. Its activity is regulated as follows. Inhibited by fructose 1,6-bisphosphate and p-chloromercuribenzoate (PCMB). Its function is as follows. Key enzyme in the regulation of glycerol uptake and metabolism. Catalyzes the phosphorylation of glycerol to yield sn-glycerol 3-phosphate. This is Glycerol kinase from Thermus thermophilus.